The primary structure comprises 455 residues: GTPase Der (455 aa).

2 EngA-type G domains span residues 4 to 169 (PIVA…PPKH) and 178 to 353 (IQMA…EQHR). GTP is bound by residues 10–17 (GRPNVGKS), 57–61 (DTGGL), 120–123 (NKCE), 184–191 (GRPNVGKS), 231–235 (DTAGI), and 296–299 (NKWD). The KH-like domain maps to 354 to 439 (RRVSTSVVNE…PLKLFWRGKQ (86 aa)).

It belongs to the TRAFAC class TrmE-Era-EngA-EngB-Septin-like GTPase superfamily. EngA (Der) GTPase family. As to quaternary structure, associates with the 50S ribosomal subunit.

GTPase that plays an essential role in the late steps of ribosome biogenesis. The protein is GTPase Der of Prochlorococcus marinus (strain MIT 9313).